The sequence spans 639 residues: Polypeptide N-acetylgalactosaminyltransferase 15 (639 aa).

Over 1 to 11 (MLLRKRYRHRP) the chain is Cytoplasmic. A helical; Signal-anchor for type II membrane protein membrane pass occupies residues 12–34 (CRLQFLLLLLMLGCVLMMVAMLH). Residues 35-639 (PPHHTLHQTV…FDQINAVDER (605 aa)) are Lumenal-facing. The interval 106–155 (RNQSQGRRGGSYRLIKQPRRQDKEAPKRDWGADEDGEVSEEEELTPFSLD) is disordered. N107 carries N-linked (GlcNAc...) asparagine glycosylation. Residues 124-136 (RRQDKEAPKRDWG) are compositionally biased toward basic and acidic residues. Residues 137-149 (ADEDGEVSEEEEL) are compositionally biased toward acidic residues. 5 disulfide bridges follow: C181–C412, C403–C482, C517–C536, C562–C575, and C603–C620. The interval 190 to 299 (LPTASVILCF…PGWLEPLLSR (110 aa)) is catalytic subdomain A. The substrate site is built by D231 and R260. Mn(2+)-binding residues include D283, H285, and H417. Positions 358–420 (PIRSPVVPGE…PCSRVGHIYQ (63 aa)) are catalytic subdomain B. Residues 504 to 631 (SFSGKLHNTG…GKARQQWRFD (128 aa)) enclose the Ricin B-type lectin domain. N-linked (GlcNAc...) asparagine glycosylation occurs at N574.

It belongs to the glycosyltransferase 2 family. GalNAc-T subfamily. Mn(2+) is required as a cofactor. As to expression, widely expressed. Highly expressed in small intestine, placenta, spleen, cerebral cortex and ovary. Expressed at intermediate level in uterus, mammary gland, stomach, cerebellum and whole brain. Weakly expressed in fetal brain, bone marrow, thyroid gland, thymus, heart, skeletal muscle, lung, liver, colon, pancreas, kidney and testis. Not expressed in leukocyte. Expressed in both normal and osteoarthritic cartilage. Expressed at low level in chondrocytes in all zones of both normal and osteoarthritic cartilage.

It localises to the golgi apparatus membrane. It catalyses the reaction L-seryl-[protein] + UDP-N-acetyl-alpha-D-galactosamine = a 3-O-[N-acetyl-alpha-D-galactosaminyl]-L-seryl-[protein] + UDP + H(+). It carries out the reaction L-threonyl-[protein] + UDP-N-acetyl-alpha-D-galactosamine = a 3-O-[N-acetyl-alpha-D-galactosaminyl]-L-threonyl-[protein] + UDP + H(+). It participates in protein modification; protein glycosylation. Its function is as follows. Catalyzes the initial reaction in O-linked oligosaccharide biosynthesis, the transfer of an N-acetyl-D-galactosamine residue to a serine or threonine residue on the protein receptor. Although it displays a much weaker activity toward all substrates tested compared to GALNT2, it is able to transfer up to seven GalNAc residues to the Muc5AC peptide, suggesting that it can fill vicinal Thr/Ser residues in cooperation with other GALNT proteins. Prefers Muc1a as substrate. The protein is Polypeptide N-acetylgalactosaminyltransferase 15 (GALNT15) of Homo sapiens (Human).